A 179-amino-acid chain; its full sequence is uncharacterized protein (179 aa).

Its subcellular location is the plastid. It localises to the cyanelle. This is an uncharacterized protein from Cyanophora paradoxa.